Reading from the N-terminus, the 846-residue chain is Vinculin (846 aa).

Positions 1–257 (MPVKFHTKTL…VLQLTTTFEE (257 aa)) are interaction with TLN. Residues 315 to 370 (RAKLLAAADELDQILKELEELQAKGLGDSRQARALAHAAAVKLQELEQEIRKALAE) adopt a coiled-coil conformation. The interval 617–646 (WVPPRPPLPELEEEEEPPELPPPPEDPASL) is disordered.

Belongs to the vinculin/alpha-catenin family. Monomer. Interacts with TLN (talin); the interaction facilitates VIN1 binding to F-actin. In terms of tissue distribution, expressed in epithelial tissues, specifically the pinacoderm (outer epithelium) and choanoderm (feeding epithelium) (at protein level). Also detected in migratory cells of the mesohyl (at protein level).

It localises to the cytoplasm. The protein localises to the cell cortex. The protein resides in the cell projection. It is found in the filopodium. Its subcellular location is the cytoskeleton. In terms of biological role, actin filament (F-actin)-binding protein which may play a role in cell-cell adhesion. This Oscarella pearsei (Sponge) protein is Vinculin.